The following is a 1299-amino-acid chain: Sophorolipid transporter (1299 aa).

The Cytoplasmic portion of the chain corresponds to 1–64 (MVDDIQVEKR…FCTPLDVFLE (64 aa)). A helical transmembrane segment spans residues 65–85 (ILALFFAAVHGAALPMFTLVV). The ABC transmembrane type-1 1 domain occupies 65 to 356 (ILALFFAAVH…IAPNVRFLVK (292 aa)). Over 86–114 (GAIFNTFRDFTSYDLKGNEFQHKVNHLSL) the chain is Extracellular. A helical membrane pass occupies residues 115 to 135 (YFVYIGIGMLGSAFLESFLLV). The Cytoplasmic segment spans residues 136-187 (DRGEVLAGRYRKHYLSAVIRQNIAFYDKLGGGEVSTRIINDTNSIQEAISDK). Residues 188-208 (LGNVVQGIASFIAATVISFAS) traverse the membrane as a helical segment. The Extracellular portion of the chain corresponds to 209–214 (QWKLAC). Residues 215 to 235 (ILLSAVGFMVITMGTGATFMA) form a helical membrane-spanning segment. Residues 236–293 (KYQLRSDAIYSQSGATVAEEALSAVRTTVAFGAQPHLAVKYEKVLDRVVKESKRSSYS) are Cytoplasmic-facing. The chain crosses the membrane as a helical span at residues 294–314 (LGVMLACIWASTFWVYALALW). Topologically, residues 315–326 (QGSREIVSGSAD) are extracellular. A helical membrane pass occupies residues 327–347 (VGKIIVVITAMLLGSFQLGNI). Residues 348-725 (APNVRFLVKG…WGLNRKEWGY (378 aa)) lie on the Cytoplasmic side of the membrane. The 246-residue stretch at 393-638 (IELKNVKFRY…EGPYKALVDA (246 aa)) folds into the ABC transporter 1 domain. Residue 428-435 (GASGSGKS) coordinates ATP. Positions 681–690 (SAGTQTTQPP) are enriched in polar residues. The disordered stretch occupies residues 681-703 (SAGTQTTQPPEYQENDIPGVRNP). Residues 726-746 (ILIGSLASIILGYCYPAMAII) traverse the membrane as a helical segment. The ABC transmembrane type-1 2 domain maps to 727 to 1016 (LIGSLASIIL…IFSYAPNMNS (290 aa)). Topologically, residues 747–769 (TGQTTGSMVLPPSEYGKMRHVVN) are extracellular. A helical transmembrane segment spans residues 770-790 (IMGWWYFFVGCISFMTAFITI). The Cytoplasmic segment spans residues 791 to 848 (AALSLASDKLVKNIRLALFRQLMRMDIAFFDHKNNTPGALTSILAKEAKMIEGLSGAT). Residues 849-869 (LGQIQQSLVTLIGGIVTGIPF) form a helical membrane-spanning segment. Over 870 to 874 (NWRIG) the chain is Extracellular. Residues 875-895 (LVATSVVPVMLVCGFVRVWVL) form a helical membrane-spanning segment. Topologically, residues 896–954 (TQLSDRAREVYERSGSMASEYTSAVRTVQSLTRELDVVVKYTKTVDSQIFSSRIAIARS) are cytoplasmic. Residues 955-975 (ALYYALSEGMTPWVVALVFWW) form a helical membrane-spanning segment. Topologically, residues 976–987 (GSTVMRRGEASV) are extracellular. Residues 988–1008 (AGYMTVFMAIITGSQAAGQIF) form a helical membrane-spanning segment. Over 1009–1299 (SYAPNMNSAK…LVNLQGLGEI (291 aa)) the chain is Cytoplasmic. One can recognise an ABC transporter 2 domain in the interval 1053-1293 (IEFRHVNFRY…NGWYAELVNL (241 aa)). Position 1088–1095 (1088–1095 (GASGCGKS)) interacts with ATP.

The protein belongs to the ABC transporter superfamily. ABCB family. Multidrug resistance exporter (TC 3.A.1.201) subfamily.

It is found in the cell membrane. Functionally, transports acidic acylated and non-acylated sophorolipids (SLs) into the extracellular space, where they can be lactonized by lactone esterase. The sequence is that of Sophorolipid transporter (mdr) from Starmerella bombicola (Yeast).